Here is a 278-residue protein sequence, read N- to C-terminus: Manganese import system permease protein ScaB (278 aa).

A run of 8 helical transmembrane segments spans residues 18 to 38 (ALITAIVIGVVAGAVGCFIIL), 61 to 81 (ILGINFFIGAITFGLLASIII), 94 to 114 (TAIGITFSSFLALGIILISVA), 134 to 154 (LDMWISIGVGILVLLVISIFF), 174 to 194 (VNFYHYLLMILLTLVSVTAMQ), 196 to 216 (VGTILIVAMLITPAATAYLYA), 222 to 242 (MILLSSALGAGASVLGLFIGY), and 246 to 266 (VAAGSSIVLTSALIFLVSFFI).

This sequence belongs to the ABC-3 integral membrane protein family. In terms of assembly, the complex is composed of two ATP-binding proteins (ScaC), two transmembrane proteins (ScaB) and a solute-binding protein (ScaA).

The protein localises to the cell membrane. Part of the high-affinity ABC transporter complex ScaABC involved in manganese import. Probably responsible for the translocation of the substrate across the membrane. Essential for growth under Mn(2+)-limiting conditions. The protein is Manganese import system permease protein ScaB of Streptococcus gordonii.